Consider the following 230-residue polypeptide: 7-cyano-7-deazaguanine synthase (230 aa).

10-20 (LSGGLDSATTA) serves as a coordination point for ATP. Zn(2+) is bound by residues Cys191, Cys199, Cys202, and Cys205.

The protein belongs to the QueC family. Zn(2+) serves as cofactor.

The enzyme catalyses 7-carboxy-7-deazaguanine + NH4(+) + ATP = 7-cyano-7-deazaguanine + ADP + phosphate + H2O + H(+). The protein operates within purine metabolism; 7-cyano-7-deazaguanine biosynthesis. Its function is as follows. Catalyzes the ATP-dependent conversion of 7-carboxy-7-deazaguanine (CDG) to 7-cyano-7-deazaguanine (preQ(0)). This Gloeothece citriformis (strain PCC 7424) (Cyanothece sp. (strain PCC 7424)) protein is 7-cyano-7-deazaguanine synthase.